The chain runs to 152 residues: Large ribosomal subunit protein bL9 (152 aa).

This sequence belongs to the bacterial ribosomal protein bL9 family.

Binds to the 23S rRNA. This is Large ribosomal subunit protein bL9 from Nostoc punctiforme (strain ATCC 29133 / PCC 73102).